A 665-amino-acid chain; its full sequence is E3 ubiquitin-protein ligase cblA (665 aa).

The disordered stretch occupies residues 30 to 50; it reads NNNNNINNNNNNNNINSNNNG. The segment at 109-231 is 4H; it reads TSLVNYIHYE…NNENNNNNNN (123 aa). A Cbl-PTB domain is found at 109–400; it reads TSLVNYIHYE…PDIFKSILSF (292 aa). Positions 232–306 are EF-hand-like; that stretch reads NYNPYELLSN…FKLSVFIKWF (75 aa). Ca(2+)-binding residues include Asp-287, Thr-289, Asp-291, and Tyr-293. Residues 307–400 are SH2-like; that stretch reads GALPVSLGIF…PDIFKSILSF (94 aa). 2 disordered regions span residues 437 to 456 and 467 to 609; these read ENNN…INTF and DSSN…NNNN. Positions 467-478 are enriched in low complexity; it reads DSSNSSDTNKSP. The stretch at 479-544 forms a coiled coil; it reads TKSRKSSFKN…NNNNNNNNNN (66 aa). Positions 486 to 512 are enriched in basic and acidic residues; the sequence is FKNDKDKKEKEKEKGKDKEKEKERVSD. 2 stretches are compositionally biased toward low complexity: residues 530–561 and 571–609; these read NNNN…NNNN and TSNG…NNNN. Residues 618–653 form an RING-type zinc finger; sequence CTVCMDNEINTVFLECGHLSCCSLCSVKLKKCPICR.

Post-translationally, ubiquitinated.

Its subcellular location is the cytoplasm. The protein resides in the nucleus. It catalyses the reaction S-ubiquitinyl-[E2 ubiquitin-conjugating enzyme]-L-cysteine + [acceptor protein]-L-lysine = [E2 ubiquitin-conjugating enzyme]-L-cysteine + N(6)-ubiquitinyl-[acceptor protein]-L-lysine.. It participates in protein modification; protein ubiquitination. Functionally, acts as an E3 ubiquitin-protein ligase, which accepts ubiquitin from specific E2 ubiquitin-conjugating enzymes, and then transfers it to substrates promoting their degradation by the proteasome. Up-regulates STATc tyrosine phosphorylation via an inhibitory effect on ptpC accumulation. Recognizes activated receptor tyrosine kinases, RTKs and terminates signaling. This chain is E3 ubiquitin-protein ligase cblA (cblA-1), found in Dictyostelium discoideum (Social amoeba).